The following is a 233-amino-acid chain: Purine nucleoside phosphorylase DeoD-type (233 aa).

Position 4 (H4) interacts with a purine D-ribonucleoside. Residues G20, R24, R43, and 87–90 (RIGT) each bind phosphate. Residues 179-181 (EME) and 203-204 (SD) contribute to the a purine D-ribonucleoside site. Catalysis depends on D204, which acts as the Proton donor.

This sequence belongs to the PNP/UDP phosphorylase family. In terms of assembly, homohexamer; trimer of homodimers.

It catalyses the reaction a purine D-ribonucleoside + phosphate = a purine nucleobase + alpha-D-ribose 1-phosphate. The catalysed reaction is a purine 2'-deoxy-D-ribonucleoside + phosphate = a purine nucleobase + 2-deoxy-alpha-D-ribose 1-phosphate. Its function is as follows. Catalyzes the reversible phosphorolytic breakdown of the N-glycosidic bond in the beta-(deoxy)ribonucleoside molecules, with the formation of the corresponding free purine bases and pentose-1-phosphate. The chain is Purine nucleoside phosphorylase DeoD-type from Thermoanaerobacter pseudethanolicus (strain ATCC 33223 / 39E) (Clostridium thermohydrosulfuricum).